Here is a 101-residue protein sequence, read N- to C-terminus: Small ribosomal subunit protein uS14 (101 aa).

It belongs to the universal ribosomal protein uS14 family. Part of the 30S ribosomal subunit. Contacts proteins S3 and S10.

Its function is as follows. Binds 16S rRNA, required for the assembly of 30S particles and may also be responsible for determining the conformation of the 16S rRNA at the A site. This chain is Small ribosomal subunit protein uS14, found in Alteromonas mediterranea (strain DSM 17117 / CIP 110805 / LMG 28347 / Deep ecotype).